The following is a 475-amino-acid chain: Ribulose bisphosphate carboxylase large chain (475 aa).

A propeptide spanning residues 1 to 2 (MS) is cleaved from the precursor. Pro3 carries the post-translational modification N-acetylproline. Lys14 carries the post-translational modification N6,N6,N6-trimethyllysine. Substrate-binding residues include Asn123 and Thr173. Lys175 serves as the catalytic Proton acceptor. Lys177 is a binding site for substrate. The Mg(2+) site is built by Lys201, Asp203, and Glu204. Lys201 is subject to N6-carboxylysine. Residue His294 is the Proton acceptor of the active site. Residues Arg295, His327, and Ser379 each contribute to the substrate site.

It belongs to the RuBisCO large chain family. Type I subfamily. As to quaternary structure, heterohexadecamer of 8 large chains and 8 small chains; disulfide-linked. The disulfide link is formed within the large subunit homodimers. The cofactor is Mg(2+). In terms of processing, the disulfide bond which can form in the large chain dimeric partners within the hexadecamer appears to be associated with oxidative stress and protein turnover.

The protein localises to the plastid. Its subcellular location is the chloroplast. It carries out the reaction 2 (2R)-3-phosphoglycerate + 2 H(+) = D-ribulose 1,5-bisphosphate + CO2 + H2O. The enzyme catalyses D-ribulose 1,5-bisphosphate + O2 = 2-phosphoglycolate + (2R)-3-phosphoglycerate + 2 H(+). RuBisCO catalyzes two reactions: the carboxylation of D-ribulose 1,5-bisphosphate, the primary event in carbon dioxide fixation, as well as the oxidative fragmentation of the pentose substrate in the photorespiration process. Both reactions occur simultaneously and in competition at the same active site. This is Ribulose bisphosphate carboxylase large chain from Gossypium hirsutum (Upland cotton).